The following is a 573-amino-acid chain: Hemagglutinin-neuraminidase (573 aa).

At 1–27 the chain is on the intravirion side; sequence MQDSHGNTQILNQANSMVKRTWRLLFR. The helical transmembrane segment at 28–48 threads the bilayer; the sequence is IATLILLVSIFVLSLIIVLQS. Over 49 to 573 the chain is Virion surface; it reads TPGNLQNDIN…DFQITLFLAA (525 aa). Cystine bridges form between C173–C197, C187–C248, and C239–C252. The tract at residues 235 to 240 is involved in neuraminidase activity; the sequence is NRKSCS. 4 N-linked (GlcNAc...) asparagine; by host glycosylation sites follow: N258, N330, N339, and N347. 3 cysteine pairs are disulfide-bonded: C345-C466, C377-C387, and C460-C470. N433 carries N-linked (GlcNAc...) asparagine; by host glycosylation. Residues N502 and N530 are each glycosylated (N-linked (GlcNAc...) asparagine; by host). A disulfide bridge links C540 with C551.

Belongs to the paramyxoviruses hemagglutinin-neuraminidase family. As to quaternary structure, homotetramer; composed of disulfide-linked homodimers. Interacts with F protein trimer.

It is found in the virion membrane. Its subcellular location is the host cell membrane. It carries out the reaction Hydrolysis of alpha-(2-&gt;3)-, alpha-(2-&gt;6)-, alpha-(2-&gt;8)- glycosidic linkages of terminal sialic acid residues in oligosaccharides, glycoproteins, glycolipids, colominic acid and synthetic substrates.. Functionally, attaches the virus to sialic acid-containing cell receptors and thereby initiating infection. Binding of HN protein to the receptor induces a conformational change that allows the F protein to trigger virion/cell membranes fusion. Neuraminidase activity ensures the efficient spread of the virus by dissociating the mature virions from the neuraminic acid containing glycoproteins. The protein is Hemagglutinin-neuraminidase (HN) of Homo sapiens (Human).